Reading from the N-terminus, the 422-residue chain is Protein FAM53B (422 aa).

Phosphoserine is present on residues Ser119, Ser168, Ser170, Ser180, Ser213, and Ser269. 2 disordered regions span residues 193-225 and 243-269; these read GQPCQGAPGSAPCGQAGDSWSPDPHPVGGGRLD and CPPSANSTPASTPELARRSSGLARSRS. The segment covering 244-269 has biased composition (low complexity); sequence PPSANSTPASTPELARRSSGLARSRS. Positions 282-285 match the Nuclear localization signal motif; sequence KRRR. Ser335 and Ser344 each carry phosphoserine.

The protein belongs to the FAM53 family. In terms of assembly, interacts with CTNNB1.

The protein resides in the nucleus. Its function is as follows. Acts as a regulator of Wnt signaling pathway by regulating beta-catenin (CTNNB1) nuclear localization. The sequence is that of Protein FAM53B from Mus musculus (Mouse).